The sequence spans 950 residues: Oxysterol-binding protein-related protein 1 (950 aa).

The tract at residues 1 to 237 (MNTEAEQQLL…NKVVHKALKR (237 aa)) is interaction with RAB7A. 3 ANK repeats span residues 47–76 (LGWT…KVNM), 80–109 (MGDT…DTTV), and 175–204 (LGNT…DPSL). One can recognise a PH domain in the interval 235–334 (LKRFEGPLWK…WLEAIEEHSA (100 aa)). A coiled-coil region spans residues 430–463 (NFKLEQEQEKNKILSEALETLATEHHELERSLVE). Positions 469–483 (SILSEDEFYDALSGS) match the FFAT motif. Disordered regions lie at residues 795–821 (KKNT…VPDS) and 881–913 (MENG…SEED). The stretch at 877–913 (DIRAMENGEIDQASEEKKRLEEKQRAARKNRSKSEED) forms a coiled coil. Over residues 890-901 (SEEKKRLEEKQR) the composition is skewed to basic and acidic residues.

Belongs to the OSBP family. Interacts (via FFAT motif) with VAPA. Interacts (via FFAT motif) with VAPB. Interacts with the GTP-bound form of RAB7A. Interacts with OAS1B. Interacts (via FFAT motif) with MOSPD2 (via MSP domain). In terms of tissue distribution, detected in prostate and liver.

The protein resides in the late endosome. In terms of biological role, binds phospholipids; exhibits strong binding to phosphatidic acid and weak binding to phosphatidylinositol 3-phosphate. Stabilizes GTP-bound RAB7A on late endosomes/lysosomes and alters functional properties of late endocytic compartments via its interaction with RAB7A. Binds 25-hydroxycholesterol and cholesterol. The sequence is that of Oxysterol-binding protein-related protein 1 from Rattus norvegicus (Rat).